A 242-amino-acid polypeptide reads, in one-letter code: Triosephosphate isomerase (242 aa).

9–11 (NWK) serves as a coordination point for substrate. The active-site Electrophile is H90. The Proton acceptor role is filled by E162. Substrate is bound by residues G168, S205, and 226–227 (GG).

Belongs to the triosephosphate isomerase family. Homodimer.

The protein localises to the cytoplasm. The enzyme catalyses D-glyceraldehyde 3-phosphate = dihydroxyacetone phosphate. The protein operates within carbohydrate biosynthesis; gluconeogenesis. It functions in the pathway carbohydrate degradation; glycolysis; D-glyceraldehyde 3-phosphate from glycerone phosphate: step 1/1. Functionally, involved in the gluconeogenesis. Catalyzes stereospecifically the conversion of dihydroxyacetone phosphate (DHAP) to D-glyceraldehyde-3-phosphate (G3P). The chain is Triosephosphate isomerase from Azoarcus sp. (strain BH72).